Here is a 130-residue protein sequence, read N- to C-terminus: Fumarate reductase subunit C (130 aa).

The next 3 membrane-spanning stretches (helical) occupy residues 30–50 (EGTSIPAVWFSVLLIYGVFAL), 60–80 (FVSFLQNPLVLFLNILTLFAA), and 110–130 (IKALWVVTVVASAIILAVALL).

The protein belongs to the FrdC family. As to quaternary structure, part of an enzyme complex containing four subunits: a flavoprotein (FrdA), an iron-sulfur protein (FrdB), and two hydrophobic anchor proteins (FrdC and FrdD).

It is found in the cell inner membrane. In terms of biological role, two distinct, membrane-bound, FAD-containing enzymes are responsible for the catalysis of fumarate and succinate interconversion; fumarate reductase is used in anaerobic growth, and succinate dehydrogenase is used in aerobic growth. Anchors the catalytic components of the fumarate reductase complex to the cell inner membrane, binds quinones. This Yersinia pseudotuberculosis serotype O:1b (strain IP 31758) protein is Fumarate reductase subunit C.